Consider the following 281-residue polypeptide: Para-Rep C1 (281 aa).

Residues 3–97 form the CRESS-DNA virus Rep endonuclease domain; that stretch reads TLQGTFWCFT…VAGPWTYGEL (95 aa). The short motif at 10–13 is the RCR-1 element; that stretch reads CFTL. Positions 36 and 42 each coordinate a divalent metal cation. The RCR-2 motif lies at 42 to 44; it reads HLQ. A Nuclear localization signal motif is present at residues 51 to 71; that stretch reads KRSTLKMMKELLPGAHLEVSK. Tyr80 functions as the For DNA cleavage activity in the catalytic mechanism. The RCR-3 motif lies at 80–83; the sequence is YAMK. Position 85 (Glu85) interacts with a divalent metal cation. The Nuclear localization signal signature appears at 97–103; it reads LLKKGSN. Residue 173-181 participates in ATP binding; the sequence is GPQGGEGKT.

This sequence belongs to the nanoviridea/circoviridae replication-associated protein family. As to quaternary structure, homooligomer (Potential). Rep binds to repeated DNA motifs (iterons). Requires Mg(2+) as cofactor. The cofactor is Mn(2+).

Its subcellular location is the host nucleus. It carries out the reaction ATP + H2O = ADP + phosphate + H(+). Initiates and terminates the replication only of its own subviral DNA molecule. The closed circular ssDNA genome is first converted to a superhelical dsDNA. Rep binds a specific hairpin at the genome origin of replication. Introduces an endonucleolytic nick within the intergenic region of the genome, thereby initiating the rolling circle replication (RCR). Following cleavage, binds covalently to the 5'-phosphate of DNA as a tyrosyl ester. The cleavage gives rise to a free 3'-OH that serves as a primer for the cellular DNA polymerase. The polymerase synthesizes the (+) strand DNA by rolling circle mechanism. After one round of replication, a Rep-catalyzed nucleotidyl transfer reaction releases a circular single-stranded virus genome, thereby terminating the replication. Displays origin-specific DNA cleavage, nucleotidyl transferase, ATPase and helicase activities. This Milk vetch dwarf C1 alphasatellite (MVDC1A) protein is Para-Rep C1 (C1).